A 39-amino-acid chain; its full sequence is MTIDRTYPIFTVRWLAVHGLAVPTVSFLGSISAMQFIQR.

The helical transmembrane segment at 14 to 30 threads the bilayer; the sequence is WLAVHGLAVPTVSFLGS. His18 is a heme binding site.

Belongs to the PsbE/PsbF family. As to quaternary structure, heterodimer of an alpha subunit and a beta subunit. PSII is composed of 1 copy each of membrane proteins PsbA, PsbB, PsbC, PsbD, PsbE, PsbF, PsbH, PsbI, PsbJ, PsbK, PsbL, PsbM, PsbT, PsbX, PsbY, PsbZ, Psb30/Ycf12, at least 3 peripheral proteins of the oxygen-evolving complex and a large number of cofactors. It forms dimeric complexes. It depends on heme b as a cofactor.

Its subcellular location is the plastid. The protein resides in the chloroplast thylakoid membrane. Functionally, this b-type cytochrome is tightly associated with the reaction center of photosystem II (PSII). PSII is a light-driven water:plastoquinone oxidoreductase that uses light energy to abstract electrons from H(2)O, generating O(2) and a proton gradient subsequently used for ATP formation. It consists of a core antenna complex that captures photons, and an electron transfer chain that converts photonic excitation into a charge separation. In Muilla maritima (Sea muilla), this protein is Cytochrome b559 subunit beta.